We begin with the raw amino-acid sequence, 542 residues long: Glucose-6-phosphate isomerase 2 (542 aa).

Glu353 serves as the catalytic Proton donor. Active-site residues include His384 and Lys505.

This sequence belongs to the GPI family.

It localises to the cytoplasm. It catalyses the reaction alpha-D-glucose 6-phosphate = beta-D-fructose 6-phosphate. Its pathway is carbohydrate biosynthesis; gluconeogenesis. It functions in the pathway carbohydrate degradation; glycolysis; D-glyceraldehyde 3-phosphate and glycerone phosphate from D-glucose: step 2/4. Functionally, catalyzes the reversible isomerization of glucose-6-phosphate to fructose-6-phosphate. This is Glucose-6-phosphate isomerase 2 from Cupriavidus pinatubonensis (strain JMP 134 / LMG 1197) (Cupriavidus necator (strain JMP 134)).